The sequence spans 496 residues: MDHNDNDLQGTNSMGSLSGLDVRRRIPIKLISKHPNKIKPAPRPQRNMNRIPTKPQPGFDYNEEERYENKGDVFNNQRRFSAHLFWDFKLNLIGEKEDTPVHFCDKCGLPIKIYGRMIPCKHVFCYDCALMHEKKADKLCPGTLVEDSTDTFKRMSCNDPVQRIEQCARGSLFMCSIVQGCKRTYLSQRDLQAHINHRHMRASKPTARPQPEPIHPPLAPPPAEIPDRFIMPPDKHHLSHMPPKQHILMPPPPMQHVPHEHFSQQHDDIRPSPADISLAPPPPRSVNQDAFRISTRQHSNLITVPIQDDSNSGARETPQAPGPTLHHPEYPGQPVVAHPHHIMPPQQHYAPPPPPPPPISHPMQHPPQAAGTPHMVYSQGPPPPMTTAPPPITPPPGHIIAQIPPYMNHPPPGPPPQHGGPPVNAPPPHHYNPSSMPQFNEDQGTLSPPFTQPGGMSPGMWPAPRGPPPRMQGPPSQAPMPGPHHPDQARYRPYYQ.

Residues 35–60 are disordered; that stretch reads PNKIKPAPRPQRNMNRIPTKPQPGFD. The segment at 104–144 adopts an RING-type; degenerate zinc-finger fold; sequence CDKCGLPIKIYGRMIPCKHVFCYDCALMHEKKADKLCPGTL. The tract at residues 157-215 is HYB domain; the sequence is CNDPVQRIEQCARGSLFMCSIVQGCKRTYLSQRDLQAHINHRHMRASKPTARPQPEPIH. The C2H2-type zinc-finger motif lies at 173-199; sequence FMCSIVQGCKRTYLSQRDLQAHINHRH. Residues 304–314 show a composition bias toward polar residues; that stretch reads VPIQDDSNSGA. The disordered stretch occupies residues 304–496; sequence VPIQDDSNSG…DQARYRPYYQ (193 aa). Pro residues-rich tracts occupy residues 350-360, 380-397, and 407-430; these read APPPPPPPPIS, GPPP…PPPG, and MNHP…PPHH. Over residues 434-449 the composition is skewed to polar residues; that stretch reads SSMPQFNEDQGTLSPP. Residues 464-483 show a composition bias toward pro residues; sequence PRGPPPRMQGPPSQAPMPGP.

Belongs to the Hakai family. As to quaternary structure, homodimer. Interacts with tyrosine-phosphorylated SRC substrates. Component of the WMM complex, a N6-methyltransferase complex composed of a catalytic subcomplex, named MAC, and of an associated subcomplex, named MACOM. Component of the MACOM subcomplex.

It is found in the nucleus speckle. The protein resides in the nucleus. It localises to the nucleoplasm. The enzyme catalyses S-ubiquitinyl-[E2 ubiquitin-conjugating enzyme]-L-cysteine + [acceptor protein]-L-lysine = [E2 ubiquitin-conjugating enzyme]-L-cysteine + N(6)-ubiquitinyl-[acceptor protein]-L-lysine.. The protein operates within protein modification; protein ubiquitination. E3 ubiquitin-protein ligase that mediates ubiquitination of several tyrosine-phosphorylated Src substrates. Associated component of the WMM complex, a complex that mediates N6-methyladenosine (m6A) methylation of RNAs, a modification that plays a role in the efficiency of mRNA splicing and RNA processing. This chain is E3 ubiquitin-protein ligase Hakai, found in Xenopus laevis (African clawed frog).